Reading from the N-terminus, the 484-residue chain is Probable efflux pump outer membrane protein TtgC (484 aa).

An N-terminal signal peptide occupies residues 1–17; the sequence is MTKSLLSLAVTAFILGG. The N-palmitoyl cysteine moiety is linked to residue Cys18. Cys18 is lipidated: S-diacylglycerol cysteine.

It belongs to the outer membrane factor (OMF) (TC 1.B.17) family.

The protein resides in the cell outer membrane. Its function is as follows. Probable outer membrane component of the TtgABC efflux pump with unknown specificity. The sequence is that of Probable efflux pump outer membrane protein TtgC (ttgC) from Pseudomonas putida (strain ATCC 47054 / DSM 6125 / CFBP 8728 / NCIMB 11950 / KT2440).